A 256-amino-acid chain; its full sequence is Homeobox protein goosecoid (256 aa).

The homeobox DNA-binding region spans 160–219; the sequence is KRRHRTIFTDEQLEALENLFQETKYPDVGTREQLARKVHLREEKVEVWFKNRRAKWRRQK. The segment at 213 to 256 is disordered; it reads AKWRRQKRSSSEESENAEKWNKTSSKASPEKREEEGKSDLDSDS. Over residues 240–256 the composition is skewed to basic and acidic residues; sequence SPEKREEEGKSDLDSDS.

Belongs to the paired homeobox family. Bicoid subfamily. In terms of tissue distribution, in early gastrulation, expressed in the dorsal lip. In later stages of development found in head, limbs and body wall. In the embryo, expressed in the postotic cranial neural crest cells, the frontonasal prominence, the first branchial arch and cleft, and specific regions of large joints.

The protein resides in the nucleus. In terms of biological role, regulates chordin (CHRD). May play a role in spatial programing within discrete embryonic fields or lineage compartments during organogenesis. In concert with NKX3-2, plays a role in defining the structural components of the middle ear; required for the development of the entire tympanic ring. Goosecoid-expressing regions of the gastrulating mouse egg cylinder have organizer-like activity when transplanted into Xenopus embryos. Probably involved in the regulatory networks that define neural crest cell fate specification and determine mesoderm cell lineages in mammals. The sequence is that of Homeobox protein goosecoid (Gsc) from Mus musculus (Mouse).